Here is a 123-residue protein sequence, read N- to C-terminus: UPF0738 protein BCE33L1094 (123 aa).

Belongs to the UPF0738 family.

The protein is UPF0738 protein BCE33L1094 of Bacillus cereus (strain ZK / E33L).